The sequence spans 357 residues: N-acetyl-gamma-glutamyl-phosphate reductase (357 aa).

Residue Cys160 is part of the active site.

Belongs to the NAGSA dehydrogenase family. Type 1 subfamily.

It is found in the cytoplasm. It carries out the reaction N-acetyl-L-glutamate 5-semialdehyde + phosphate + NADP(+) = N-acetyl-L-glutamyl 5-phosphate + NADPH + H(+). It functions in the pathway amino-acid biosynthesis; L-arginine biosynthesis; N(2)-acetyl-L-ornithine from L-glutamate: step 3/4. Functionally, catalyzes the NADPH-dependent reduction of N-acetyl-5-glutamyl phosphate to yield N-acetyl-L-glutamate 5-semialdehyde. The sequence is that of N-acetyl-gamma-glutamyl-phosphate reductase from Synechococcus sp. (strain CC9605).